Consider the following 164-residue polypeptide: MAKNNVVKAQGTDLYFIDPDTHVVMNAGCITSLSGIDTSIDQIETTCLNETARSYVAGLATPGTATFSINTNPQDPVHIRLLELKNAGVSLDWAVGWSDGTSAPTAVLDSSGEYDFDVPADRSWLLFEGYMNSFSFEFAQNAVVTSSIGIQVSGEPVLIPKSTS.

The protein resides in the virion. In terms of biological role, structural protein. The chain is Structural protein 3 from Pseudomonas phage PAJU2.